The sequence spans 216 residues: Pyridoxine/pyridoxamine 5'-phosphate oxidase (216 aa).

Residues 12–15 (RREY) and Lys70 each bind substrate. FMN contacts are provided by residues 65 to 70 (RVVLLK), 80 to 81 (YT), Arg86, Lys87, and Gln109. Tyr127 and Arg131 together coordinate substrate. FMN-binding positions include 144–145 (QS) and Trp189. 195 to 197 (RLH) contributes to the substrate binding site. Arg199 lines the FMN pocket.

The protein belongs to the pyridoxamine 5'-phosphate oxidase family. Homodimer. It depends on FMN as a cofactor.

It carries out the reaction pyridoxamine 5'-phosphate + O2 + H2O = pyridoxal 5'-phosphate + H2O2 + NH4(+). The enzyme catalyses pyridoxine 5'-phosphate + O2 = pyridoxal 5'-phosphate + H2O2. It participates in cofactor metabolism; pyridoxal 5'-phosphate salvage; pyridoxal 5'-phosphate from pyridoxamine 5'-phosphate: step 1/1. Its pathway is cofactor metabolism; pyridoxal 5'-phosphate salvage; pyridoxal 5'-phosphate from pyridoxine 5'-phosphate: step 1/1. In terms of biological role, catalyzes the oxidation of either pyridoxine 5'-phosphate (PNP) or pyridoxamine 5'-phosphate (PMP) into pyridoxal 5'-phosphate (PLP). This is Pyridoxine/pyridoxamine 5'-phosphate oxidase from Blochmanniella pennsylvanica (strain BPEN).